The chain runs to 396 residues: L-lactate dehydrogenase (396 aa).

The FMN hydroxy acid dehydrogenase domain maps to 1 to 380 (MIISAASDYR…SGDSLVQELG (380 aa)). Y24 contacts substrate. Positions 106 and 127 each coordinate FMN. Y129 is a substrate binding site. Residue T155 participates in FMN binding. A substrate-binding site is contributed by R164. Residue K251 participates in FMN binding. The active-site Proton acceptor is H275. R278 lines the substrate pocket. Residue 306–330 (DSGIRNGLDVVRMIALGADTVLLGR) coordinates FMN.

This sequence belongs to the FMN-dependent alpha-hydroxy acid dehydrogenase family. Requires FMN as cofactor.

The protein localises to the cell inner membrane. The catalysed reaction is (S)-lactate + A = pyruvate + AH2. Catalyzes the conversion of L-lactate to pyruvate. Is coupled to the respiratory chain. In Salmonella enteritidis PT4 (strain P125109), this protein is L-lactate dehydrogenase.